The primary structure comprises 356 residues: Inositol monophosphatase 3 (356 aa).

The helical transmembrane segment at 11–31 threads the bilayer; the sequence is LGIGVFCLLGLGVLYHVYSGF. Mg(2+)-binding residues include Glu-127, Asp-167, Leu-169, Asp-170, and Asp-293. Glu-127 is a binding site for substrate. Residues 169-172 and Asp-293 each bind substrate; that span reads LDAT.

The protein belongs to the inositol monophosphatase superfamily. Mg(2+) serves as cofactor.

The protein resides in the membrane. The enzyme catalyses a myo-inositol phosphate + H2O = myo-inositol + phosphate. It participates in polyol metabolism; myo-inositol biosynthesis; myo-inositol from D-glucose 6-phosphate: step 2/2. The sequence is that of Inositol monophosphatase 3 (bpnt2) from Xenopus tropicalis (Western clawed frog).